The chain runs to 135 residues: Photosystem II extrinsic protein V (135 aa).

Residues cysteine 37, cysteine 40, histidine 41, and histidine 92 each contribute to the heme c site.

This sequence belongs to the cytochrome c family. PsbV subfamily. In terms of assembly, PSII is composed of 1 copy each of membrane proteins PsbA, PsbB, PsbC, PsbD, PsbE, PsbF, PsbH, PsbI, PsbJ, PsbK, PsbL, PsbM, PsbT, PsbX, PsbY, PsbZ, Psb30/Ycf12, peripheral proteins PsbO, CyanoQ (PsbQ), PsbU, PsbV and a large number of cofactors. It forms dimeric complexes. Requires heme c as cofactor.

Its subcellular location is the cellular thylakoid membrane. One of the extrinsic, lumenal subunits of photosystem II (PSII). PSII is a light-driven water plastoquinone oxidoreductase, using light energy to abstract electrons from H(2)O, generating a proton gradient subsequently used for ATP formation. The extrinsic proteins stabilize the structure of photosystem II oxygen-evolving complex (OEC), the ion environment of oxygen evolution and protect the OEC against heat-induced inactivation. Low-potential cytochrome c that plays a role in the OEC of PSII. This is Photosystem II extrinsic protein V from Microcystis aeruginosa.